The sequence spans 734 residues: Photosystem I P700 chlorophyll a apoprotein A2 (734 aa).

8 helical membrane-spanning segments follow: residues 46 to 69, 135 to 158, 175 to 199, 273 to 291, 330 to 353, 369 to 395, 417 to 439, and 517 to 535; these read IFAS…FHVA, LYTG…LHLQ, LNHH…HVAI, MAHH…GHMY, IHFQ…QHMY, AALY…IFFI, AIIS…LYVH, and FLVH…LILV. Residues Cys-559 and Cys-568 each contribute to the [4Fe-4S] cluster site. The next 2 membrane-spanning stretches (helical) occupy residues 575-596 and 643-665; these read AFYL…YWHW and LSVW…MFLI. Residues His-654, Met-662, and Tyr-670 each contribute to the chlorophyll a site. Trp-671 is a phylloquinone binding site. Residues 707–727 form a helical membrane-spanning segment; that stretch reads LVGLAHFSVGYIFTYAAFLIA.

It belongs to the PsaA/PsaB family. As to quaternary structure, the PsaA/B heterodimer binds the P700 chlorophyll special pair and subsequent electron acceptors. PSI consists of a core antenna complex that captures photons, and an electron transfer chain that converts photonic excitation into a charge separation. The eukaryotic PSI reaction center is composed of at least 11 subunits. P700 is a chlorophyll a/chlorophyll a' dimer, A0 is one or more chlorophyll a, A1 is one or both phylloquinones and FX is a shared 4Fe-4S iron-sulfur center. is required as a cofactor.

Its subcellular location is the plastid. It is found in the chloroplast thylakoid membrane. It carries out the reaction reduced [plastocyanin] + hnu + oxidized [2Fe-2S]-[ferredoxin] = oxidized [plastocyanin] + reduced [2Fe-2S]-[ferredoxin]. Its function is as follows. PsaA and PsaB bind P700, the primary electron donor of photosystem I (PSI), as well as the electron acceptors A0, A1 and FX. PSI is a plastocyanin-ferredoxin oxidoreductase, converting photonic excitation into a charge separation, which transfers an electron from the donor P700 chlorophyll pair to the spectroscopically characterized acceptors A0, A1, FX, FA and FB in turn. Oxidized P700 is reduced on the lumenal side of the thylakoid membrane by plastocyanin. In Arabidopsis thaliana (Mouse-ear cress), this protein is Photosystem I P700 chlorophyll a apoprotein A2.